The sequence spans 173 residues: Chorion class B protein Ld32 (173 aa).

A signal peptide spans 1-7; sequence FVQSALS.

This sequence belongs to the chorion protein family.

Its function is as follows. This protein is one of many from the eggshell of the gypsy moth. This chain is Chorion class B protein Ld32, found in Lymantria dispar (Gypsy moth).